The sequence spans 101 residues: Unclassified hydrophobin dewD (101 aa).

Positions 1–21 (MHLSTSAAAILALSLAGPTMA) are cleaved as a signal peptide. Cystine bridges form between C27/C81, C41/C73, C42/C60, and C82/C91.

In terms of assembly, self-assembles to form functional amyloid fibrils called rodlets. Self-assembly into fibrillar rodlets occurs spontaneously at hydrophobic:hydrophilic interfaces and the rodlets further associate laterally to form amphipathic monolayers.

The protein resides in the secreted. It is found in the spore wall. In terms of biological role, aerial growth, conidiation, and dispersal of filamentous fungi in the environment rely upon a capability of their secreting small amphipathic proteins called hydrophobins (HPBs) with low sequence identity. Class I can self-assemble into an outermost layer of rodlet bundles on aerial cell surfaces, conferring cellular hydrophobicity that supports fungal growth, development and dispersal; whereas Class II form highly ordered films at water-air interfaces through intermolecular interactions but contribute nothing to the rodlet structure. DewD is an unclassified hydrophobin that contributes to the hydrophobicity of the spore surface. This is Unclassified hydrophobin dewD from Emericella nidulans (strain FGSC A4 / ATCC 38163 / CBS 112.46 / NRRL 194 / M139) (Aspergillus nidulans).